The sequence spans 201 residues: MTESESAAVPVDAAAFREAMSRLASAVHLITTDGPGGRAGFTASAVCSVSDAPPTLLVCINRASSAYAALTQNGTLCVNTLGEGHETVASLFGGRTPVDERFAAGTWRRLRSGAPALADALVSFDCRIVGRHAVGSHDVLYCAVEAVAASGQADALLYSERRYRTLPRAPRSGSAPAEPARAARAVGARPAEGPALALRSA.

Over residues 167–195 (PRAPRSGSAPAEPARAARAVGARPAEGPA) the composition is skewed to low complexity. Residues 167–201 (PRAPRSGSAPAEPARAARAVGARPAEGPALALRSA) form a disordered region.

It belongs to the non-flavoprotein flavin reductase family. RutF subfamily.

It carries out the reaction FMNH2 + NAD(+) = FMN + NADH + 2 H(+). Catalyzes the reduction of FMN to FMNH2 which is used to reduce pyrimidine by RutA via the Rut pathway. The chain is FMN reductase (NADH) RutF 1 from Methylorubrum extorquens (strain CM4 / NCIMB 13688) (Methylobacterium extorquens).